The sequence spans 107 residues: Large ribosomal subunit protein uL24 (107 aa).

This sequence belongs to the universal ribosomal protein uL24 family. Part of the 50S ribosomal subunit.

One of two assembly initiator proteins, it binds directly to the 5'-end of the 23S rRNA, where it nucleates assembly of the 50S subunit. In terms of biological role, one of the proteins that surrounds the polypeptide exit tunnel on the outside of the subunit. This is Large ribosomal subunit protein uL24 from Streptomyces coelicolor (strain ATCC BAA-471 / A3(2) / M145).